Consider the following 623-residue polypeptide: Prothrombin (623 aa).

An N-terminal signal peptide occupies residues 1 to 24 (MAHVGGLWLHGCLALAVLVSLVHS). Positions 25–43 (QHVFMAPQQALSLLQRARR) are excised as a propeptide. Positions 44-90 (ANSGFFEEMRKGNLERECVEEQCSREEAYEALESPSETDAFWAKYTA) constitute a Gla domain. E50, E51, E58, E60, E63, E64, E69, E70, E73, and E76 each carry 4-carboxyglutamate. A disulfide bridge connects residues C61 and C66. Intrachain disulfides connect C91-C104, C109-C187, C130-C170, C158-C182, C214-C292, C235-C275, C263-C287, C337-C483, C392-C408, C537-C551, and C565-C595. 2 Kringle domains span residues 108-187 (NCAE…IPVC) and 213-292 (TCVP…LDYC). Residues N120 and N144 are each glycosylated (N-linked (GlcNAc...) asparagine). Residues 365-619 (IVEGSDAEIG…LKKWMQKVID (255 aa)) form the Peptidase S1 domain. Residue H407 is the Charge relay system of the active site. N417 carries N-linked (GlcNAc...) asparagine glycosylation. The Charge relay system role is filled by D463. The segment at 552–574 (AGYKPDEGKRGDACEGDSGGPFV) is high affinity receptor-binding region which is also known as the TP508 peptide. The active-site Charge relay system is the S569.

This sequence belongs to the peptidase S1 family. As to quaternary structure, heterodimer (named alpha-thrombin) of a light and a heavy chain; disulfide-linked. Forms a heterodimer with SERPINA5. In plasma, interacts (via N-terminus) with alpha-1-microglobulin; this interaction does not prevent the activation of prothrombin to thrombin. The gamma-carboxyglutamyl residues, which bind calcium ions, result from the carboxylation of glutamyl residues by a microsomal enzyme, the vitamin K-dependent carboxylase. The modified residues are necessary for the calcium-dependent interaction with a negatively charged phospholipid surface, which is essential for the conversion of prothrombin to thrombin. Post-translationally, in the penultimate step of the coagulation cascade, prothrombin is converted to thrombin by the prothrombinase complex composed of factor Xa (F10), cofactor Va (F5), and phospholipids. This activation requires factor Xa-catalyzed sequential cleavage at 2 sites, Arg-315 and Arg-364, along 2 possible pathways. In the first pathway, the first cleavage occurs at Arg-315, leading to the formation of the inactive intermediate prethrombin-2. This pathway preferentially occurs on platelets and in the absence of cofactor Va. In the second pathway, the first cleavage occurs at Arg-364, which separates protease domain into 2 chains that remain connected through a disulfide bond and generates the active intermediate meizothrombin. The presence of cofactor Va directs activation along the meizothrombin pathway and greatly accelerates the rate of cleavage at Arg-364, but has a smaller effect on the cleavage of meizothrombin at Arg-315. Meizothrombin accumulates as an intermediate when prothrombinase is assembled on the membrane of red blood cells.

The enzyme catalyses Selective cleavage of Arg-|-Gly bonds in fibrinogen to form fibrin and release fibrinopeptides A and B.. With respect to regulation, activity is promoted in the presence of negatively charged surfaces, such as polyphosphate and dextran sulfate. Inhibited by SERPINA5. In terms of biological role, thrombin, which cleaves bonds after Arg and Lys, converts fibrinogen to fibrin and activates factors V, VII, VIII, XIII, and, in complex with thrombomodulin, protein C. Functions in blood homeostasis, inflammation and wound healing. Activates coagulation factor XI (F11); activation is promoted by the contact with negatively charged surfaces. Triggers the production of pro-inflammatory cytokines, such as MCP-1/CCL2 and IL8/CXCL8, in endothelial cells. The polypeptide is Prothrombin (F2) (Sus scrofa (Pig)).